The chain runs to 179 residues: Replication restart protein DnaT (179 aa).

Residues 1–83 (MSSRILTSHF…FEEPAAAPVA (83 aa)) form a required for trimerization and to bind PriB region. Residues 84-179 (VPMGKFAMYA…DSHIPRGFRG (96 aa)) form a binds ssDNA region. The interval 151–179 (SRASNGGQPKRDVNSVSEPDSHIPRGFRG) is disordered. A compositionally biased stretch (basic and acidic residues) spans 159-173 (PKRDVNSVSEPDSHI).

It belongs to the DnaT family. As to quaternary structure, homotrimer. Interacts with PriB. Interacts with PriC. Component of the replication restart primosome. Primosome assembly occurs via a 'hand-off' mechanism. PriA binds to replication forks, subsequently PriB then DnaT bind; DnaT then displaces ssDNA to generate the helicase loading substrate.

Involved in the restart of stalled replication forks, which reloads the replicative helicase on sites other than the origin of replication. Can function in multiple replication restart pathways. Displaces ssDNA from a PriB-ssDNA complex. Probably forms a spiral filament on ssDNA. Functionally, binds single-stranded (ss)DNA. The minimal binding site is about 26 +/- 2 nucleotides (nt) per trimer. Two DNA-protein complexes are seen with 55 nt-long ssDNA. This Klebsiella pneumoniae subsp. pneumoniae (strain ATCC 700721 / MGH 78578) protein is Replication restart protein DnaT.